A 510-amino-acid chain; its full sequence is MVTIRADEISKIIRERIEQYNTEVKIVNTGTVLQVGDGIARIYGLDEVMAGELVEFEEGTIGIALNLESKNVGVVLMGDGLMIQEGSSVKATGRIAQIPVSEAYLSRVINALAKPIDGRGEILASESRLIESPAPGIISRRSVYEPLQTGLIAIDSMIPIGRGQRELIIGDRQTGKTAVATDTILNQQGQNVICVYVAVGQKASSVAQVVTTLQERGAMEYTIVVAETADSPATLQYLAPYTGAALAEYFMYRERHTLIIYDDLSKQAQAYRQMSLLLRRPPGREAYPGDVFYLHSRLLERAAKLSSQLGEGSMTALPIVETQSGDVSAYIPTNVISITDGQIFLSADLFNAGIRPAINVGISVSRVGSAAQIKAMKQVAGKLKLELAQFAELEAFAQFASDLDKATQNQLARGQRLRELLKQSQSAPLTVEEQIVTIYTGTNGYLDSLEIGQVRKFLVELRAYLKTNKPQFKEIISSTNTLTGEAEALLKDAIKEQMELFLFQEQVEKN.

Position 170 to 177 (170 to 177 (GDRQTGKT)) interacts with ATP.

Belongs to the ATPase alpha/beta chains family. In terms of assembly, F-type ATPases have 2 components, CF(1) - the catalytic core - and CF(0) - the membrane proton channel. CF(1) has five subunits: alpha(3), beta(3), gamma(1), delta(1), epsilon(1). CF(0) has four main subunits: a, b, b' and c.

The protein resides in the plastid. Its subcellular location is the chloroplast thylakoid membrane. The enzyme catalyses ATP + H2O + 4 H(+)(in) = ADP + phosphate + 5 H(+)(out). Functionally, produces ATP from ADP in the presence of a proton gradient across the membrane. The alpha chain is a regulatory subunit. The protein is ATP synthase subunit alpha, chloroplastic of Phaseolus vulgaris (Kidney bean).